We begin with the raw amino-acid sequence, 530 residues long: uncharacterized protein (530 aa).

Belongs to the mimivirus R640 family.

This is an uncharacterized protein from Acanthamoeba polyphaga (Amoeba).